We begin with the raw amino-acid sequence, 118 residues long: Membrane-anchored ubiquitin-fold protein 3 (118 aa).

Positions 7-73 constitute a Ubiquitin-like domain; sequence IDIKFRLYDG…LENNKTVGQC (67 aa). A lipid anchor (S-palmitoyl cysteine) is attached at C113. C115 carries the post-translational modification Cysteine methyl ester. The S-geranylgeranyl cysteine moiety is linked to residue C115. A propeptide spans 116–118 (removed in mature form); the sequence is TIL.

As to expression, ubiquitous, but three fold higher expression in senescing leaves.

The protein localises to the cell membrane. Its function is as follows. May serve as docking site to facilitate the association of other proteins to the plasma membrane. This chain is Membrane-anchored ubiquitin-fold protein 3 (MUB3), found in Arabidopsis thaliana (Mouse-ear cress).